A 159-amino-acid polypeptide reads, in one-letter code: Cyclic pyranopterin monophosphate synthase (159 aa).

Substrate contacts are provided by residues L76–H78 and M114–E115. D129 is an active-site residue.

This sequence belongs to the MoaC family. Homohexamer; trimer of dimers.

The catalysed reaction is (8S)-3',8-cyclo-7,8-dihydroguanosine 5'-triphosphate = cyclic pyranopterin phosphate + diphosphate. The protein operates within cofactor biosynthesis; molybdopterin biosynthesis. In terms of biological role, catalyzes the conversion of (8S)-3',8-cyclo-7,8-dihydroguanosine 5'-triphosphate to cyclic pyranopterin monophosphate (cPMP). In Shewanella oneidensis (strain ATCC 700550 / JCM 31522 / CIP 106686 / LMG 19005 / NCIMB 14063 / MR-1), this protein is Cyclic pyranopterin monophosphate synthase.